The following is a 341-amino-acid chain: Spindolin (341 aa).

The signal sequence occupies residues 1 to 20; it reads MNKLILISLIASLYQVEVDA.

In terms of assembly, homodimer; disulfide-linked.

Functionally, this protein is a spindle body protein. This is Spindolin (SPH) from Choristoneura biennis entomopoxvirus (CbEPV).